The sequence spans 158 residues: GTP-dependent dephospho-CoA kinase (158 aa).

The GTP site is built by Asp-35, Ile-36, Val-37, Asp-54, Lys-56, Glu-109, and Asp-132.

It belongs to the GTP-dependent DPCK family.

It carries out the reaction 3'-dephospho-CoA + GTP = GDP + CoA + H(+). The protein operates within cofactor biosynthesis; coenzyme A biosynthesis. Catalyzes the GTP-dependent phosphorylation of the 3'-hydroxyl group of dephosphocoenzyme A to form coenzyme A (CoA). This is GTP-dependent dephospho-CoA kinase from Methanocaldococcus jannaschii (strain ATCC 43067 / DSM 2661 / JAL-1 / JCM 10045 / NBRC 100440) (Methanococcus jannaschii).